A 301-amino-acid polypeptide reads, in one-letter code: Protoheme IX farnesyltransferase (301 aa).

Transmembrane regions (helical) follow at residues 20–42 (FTELVKIGIVNSNTITAFTGMWL), 55–75 (VDVIFFTIVGSALIVAASGAF), 105–125 (ALMVALVLGVVGTIMLFMTTW), 126–146 (QAGVLGVIGVFLYVVVYSLYA), 150–172 (LVSNTVIGSFSGAVPPLIGWFAV), 176–198 (FSIVPIMLFLVMFCWQPPHFYAI), 227–247 (MFFWVILLTVLPFFMFDLGLV), 249–269 (VILATLLNIGWLALSIYGFKM), and 280–300 (FVYSLNYMTILFVAMVVISIF).

This sequence belongs to the UbiA prenyltransferase family. Protoheme IX farnesyltransferase subfamily. In terms of assembly, interacts with CtaA.

It is found in the cell membrane. The catalysed reaction is heme b + (2E,6E)-farnesyl diphosphate + H2O = Fe(II)-heme o + diphosphate. It functions in the pathway porphyrin-containing compound metabolism; heme O biosynthesis; heme O from protoheme: step 1/1. Its function is as follows. Converts heme B (protoheme IX) to heme O by substitution of the vinyl group on carbon 2 of heme B porphyrin ring with a hydroxyethyl farnesyl side group. This Listeria innocua serovar 6a (strain ATCC BAA-680 / CLIP 11262) protein is Protoheme IX farnesyltransferase.